Here is a 57-residue protein sequence, read N- to C-terminus: MLKWALIFFVISLIAGFLGFSGISAATAGIAKILFYIAVIIFLVFLVLALAVGGAVT.

2 consecutive transmembrane segments (helical) span residues 4 to 24 (WALIFFVISLIAGFLGFSGIS) and 33 to 53 (ILFYIAVIIFLVFLVLALAVG).

The protein belongs to the UPF0391 family.

Its subcellular location is the cell membrane. In Sinorhizobium medicae (strain WSM419) (Ensifer medicae), this protein is UPF0391 membrane protein Smed_4051.